Consider the following 751-residue polypeptide: SKI family transcriptional corepressor 1 homolog-B (751 aa).

Disordered stretches follow at residues 1-30 (MESI…SGPP), 234-267 (SRKR…PHKT), 386-434 (LDVS…GIPP), 459-569 (YGNR…HGNK), and 600-635 (QRET…SEER). Composition is skewed to polar residues over residues 14-27 (SSCS…QSYS) and 244-259 (SESS…TQGE). The segment covering 416 to 428 (RNEEDKSGDESRS) has biased composition (basic and acidic residues). The segment covering 479-491 (SESSSYRSVSPDV) has biased composition (low complexity). A compositionally biased stretch (polar residues) spans 539–558 (QENTQMHTLNDLHSTNSSET). 3 stretches are compositionally biased toward basic and acidic residues: residues 559 to 569 (RPSDMESHGNK), 603 to 612 (TSVKDVHEEE), and 620 to 635 (MEPK…SEER). A coiled-coil region spans residues 666-704 (SMAKEELQKQLVEQVELRKKLEREFQNLKDSFQDQMKRE).

Belongs to the SKI family.

It localises to the nucleus. Its function is as follows. May inhibit BMP signaling. The polypeptide is SKI family transcriptional corepressor 1 homolog-B (skor1b) (Danio rerio (Zebrafish)).